The primary structure comprises 300 residues: Actin-related protein 2/3 complex subunit 2 (300 aa).

K275 and K295 each carry N6-acetyllysine.

The protein belongs to the ARPC2 family. In terms of assembly, component of the Arp2/3 complex composed of ACTR2/ARP2, ACTR3/ARP3, ARPC1B/p41-ARC, ARPC2/p34-ARC, ARPC3/p21-ARC, ARPC4/p20-ARC and ARPC5/p16-ARC. Interacts with SHANK3; the interaction probably mediates the association of SHANK3 with the Arp2/3 complex.

The protein resides in the cytoplasm. It is found in the cytoskeleton. It localises to the cell projection. Its subcellular location is the synapse. The protein localises to the synaptosome. The protein resides in the nucleus. Functionally, actin-binding component of the Arp2/3 complex, a multiprotein complex that mediates actin polymerization upon stimulation by nucleation-promoting factor (NPF). The Arp2/3 complex mediates the formation of branched actin networks in the cytoplasm, providing the force for cell motility. Seems to contact the mother actin filament. In addition to its role in the cytoplasmic cytoskeleton, the Arp2/3 complex also promotes actin polymerization in the nucleus, thereby regulating gene transcription and repair of damaged DNA. The Arp2/3 complex promotes homologous recombination (HR) repair in response to DNA damage by promoting nuclear actin polymerization, leading to drive motility of double-strand breaks (DSBs). The protein is Actin-related protein 2/3 complex subunit 2 of Rattus norvegicus (Rat).